The chain runs to 833 residues: Leucine--tRNA ligase (833 aa).

Positions 41–52 match the 'HIGH' region motif; sequence PYPSGAGLHVGH. A 'KMSKS' region motif is present at residues 610-614; it reads KMSKS. Lys613 provides a ligand contact to ATP.

Belongs to the class-I aminoacyl-tRNA synthetase family.

The protein resides in the cytoplasm. It catalyses the reaction tRNA(Leu) + L-leucine + ATP = L-leucyl-tRNA(Leu) + AMP + diphosphate. The protein is Leucine--tRNA ligase of Streptococcus suis (strain 05ZYH33).